Here is an 892-residue protein sequence, read N- to C-terminus: Alanine--tRNA ligase (892 aa).

4 residues coordinate Zn(2+): His-574, His-578, Cys-677, and His-681.

Belongs to the class-II aminoacyl-tRNA synthetase family. Zn(2+) serves as cofactor.

The protein resides in the cytoplasm. The enzyme catalyses tRNA(Ala) + L-alanine + ATP = L-alanyl-tRNA(Ala) + AMP + diphosphate. Its function is as follows. Catalyzes the attachment of alanine to tRNA(Ala) in a two-step reaction: alanine is first activated by ATP to form Ala-AMP and then transferred to the acceptor end of tRNA(Ala). Also edits incorrectly charged Ser-tRNA(Ala) and Gly-tRNA(Ala) via its editing domain. The sequence is that of Alanine--tRNA ligase from Mesoplasma florum (strain ATCC 33453 / NBRC 100688 / NCTC 11704 / L1) (Acholeplasma florum).